Reading from the N-terminus, the 196-residue chain is NAD(P)H-quinone oxidoreductase subunit I (196 aa).

4Fe-4S ferredoxin-type domains follow at residues 54–83 and 94–123; these read GRIH…VDWV and KHYS…VTEE. Residues cysteine 63, cysteine 66, cysteine 69, cysteine 73, cysteine 103, cysteine 106, cysteine 109, and cysteine 113 each contribute to the [4Fe-4S] cluster site. A disordered region spans residues 174–196; it reads PAGAQRAGERPEAIANTAKSSEN.

It belongs to the complex I 23 kDa subunit family. In terms of assembly, NDH-1 is composed of at least 11 different subunits. [4Fe-4S] cluster serves as cofactor.

The protein localises to the cellular thylakoid membrane. The enzyme catalyses a plastoquinone + NADH + (n+1) H(+)(in) = a plastoquinol + NAD(+) + n H(+)(out). It catalyses the reaction a plastoquinone + NADPH + (n+1) H(+)(in) = a plastoquinol + NADP(+) + n H(+)(out). In terms of biological role, NDH-1 shuttles electrons from an unknown electron donor, via FMN and iron-sulfur (Fe-S) centers, to quinones in the respiratory and/or the photosynthetic chain. The immediate electron acceptor for the enzyme in this species is believed to be plastoquinone. Couples the redox reaction to proton translocation, and thus conserves the redox energy in a proton gradient. The sequence is that of NAD(P)H-quinone oxidoreductase subunit I from Thermosynechococcus vestitus (strain NIES-2133 / IAM M-273 / BP-1).